Consider the following 226-residue polypeptide: 3-isopropylmalate dehydratase small subunit (226 aa).

Positions 204 to 226 (EAETVESAREPEAVEWAGPLADR) are disordered.

The protein belongs to the LeuD family. LeuD type 1 subfamily. Heterodimer of LeuC and LeuD.

The catalysed reaction is (2R,3S)-3-isopropylmalate = (2S)-2-isopropylmalate. Its pathway is amino-acid biosynthesis; L-leucine biosynthesis; L-leucine from 3-methyl-2-oxobutanoate: step 2/4. In terms of biological role, catalyzes the isomerization between 2-isopropylmalate and 3-isopropylmalate, via the formation of 2-isopropylmaleate. In Bifidobacterium animalis subsp. lactis (strain AD011), this protein is 3-isopropylmalate dehydratase small subunit.